A 249-amino-acid polypeptide reads, in one-letter code: FMN reductase (NADPH) (249 aa).

This sequence belongs to the flavin oxidoreductase frp family. In terms of assembly, homodimer.

The catalysed reaction is FMNH2 + NADP(+) = FMN + NADPH + 2 H(+). In terms of biological role, reduces FMNH(2) to FMN, with NADPH as reductant. It also reduces nitroaromatic compounds, quinones and azo dyes. The chain is FMN reductase (NADPH) (nfrA1) from Bacillus subtilis (strain 168).